The chain runs to 208 residues: V-type ATP synthase subunit D (208 aa).

It belongs to the V-ATPase D subunit family.

Its function is as follows. Produces ATP from ADP in the presence of a proton gradient across the membrane. This is V-type ATP synthase subunit D from Chlamydia abortus (strain DSM 27085 / S26/3) (Chlamydophila abortus).